The chain runs to 685 residues: UvrABC system protein C (685 aa).

The region spanning 15–93 (ALPGVYRYFD…IKTQNPRFNI (79 aa)) is the GIY-YIG domain. The region spanning 214–249 (QELLQAMEARMMAYSGQLAFEQAAEVRNQMQALSRV) is the UVR domain. Positions 365–388 (AQGGDHAPAAQGGDPPPAASSGGH) are enriched in low complexity. Positions 365–391 (AQGGDHAPAAQGGDPPPAASSGGHPLR) are disordered.

This sequence belongs to the UvrC family. Interacts with UvrB in an incision complex.

The protein resides in the cytoplasm. Functionally, the UvrABC repair system catalyzes the recognition and processing of DNA lesions. UvrC both incises the 5' and 3' sides of the lesion. The N-terminal half is responsible for the 3' incision and the C-terminal half is responsible for the 5' incision. The protein is UvrABC system protein C of Verminephrobacter eiseniae (strain EF01-2).